A 75-amino-acid chain; its full sequence is uncharacterized protein (75 aa).

The protein localises to the plastid. It localises to the chloroplast. This is an uncharacterized protein from Calycanthus floridus var. glaucus (Eastern sweetshrub).